We begin with the raw amino-acid sequence, 759 residues long: Probable Na(+)/H(+) antiporter C3A11.09 (759 aa).

A run of 11 helical transmembrane segments spans residues 12 to 32 (HLAYAIIGGFTSLFMLCSLII), 36 to 56 (LFLGEATMATATGLIFGPYVA), 105 to 125 (MLLPVMIFGWLVSTGFMYALI), 133 to 153 (SLAIAACITATDPVLASSIVG), 172 to 192 (ESGCNDGMAIPFLYLAIYLII), 206 to 226 (IIILYECTFGCVLGAIIGVIA), 244 to 264 (FLVFYFVLALFCGGIGTIIGV), 295 to 315 (VIDLLLNLSFFVYVGAIMPWP), 319 to 339 (MPHMDLSVWRLVVLAICILIA), 361 to 381 (ALFAGHFGPIGVGALYTCLVA), and 415 to 435 (VVCFLVLSSIIVHGSSIAFFM). Threonine 442 carries the post-translational modification Phosphothreonine. The residue at position 446 (serine 446) is a Phosphoserine. Residue threonine 448 is modified to Phosphothreonine. Basic and acidic residues-rich tracts occupy residues 514–529 (LREERAESPRGGHYDA), 537–547 (YESRQPRRSNE), 590–601 (IDEKLAQGDPKA), 622–647 (NLHEPDDERQREPTLGHIESSIENHR), and 655–671 (SESHLRENSVERRRREQ). Disordered regions lie at residues 514–558 (LREE…NPGD), 578–606 (SHTSSRDANGPSIDEKLAQGDPKAKSFGR), and 622–759 (NLHE…RAWE). Positions 696 to 713 (NENNESSSDTRNGLLSDN) are enriched in polar residues. 2 N-linked (GlcNAc...) asparagine glycosylation sites follow: asparagine 699 and asparagine 713. Residues 724–733 (RAPSAAVSSE) are compositionally biased toward low complexity. At serine 735 the chain carries Phosphoserine.

This sequence belongs to the fungal Na(+)/H(+) exchanger family.

It is found in the membrane. Its function is as follows. Sodium export from cell, takes up external protons in exchange for internal sodium ions. This Schizosaccharomyces pombe (strain 972 / ATCC 24843) (Fission yeast) protein is Probable Na(+)/H(+) antiporter C3A11.09 (sod22).